Consider the following 430-residue polypeptide: tRNA(Ile)-lysidine synthase (430 aa).

27 to 32 (SGGSDS) provides a ligand contact to ATP.

The protein belongs to the tRNA(Ile)-lysidine synthase family.

It is found in the cytoplasm. It catalyses the reaction cytidine(34) in tRNA(Ile2) + L-lysine + ATP = lysidine(34) in tRNA(Ile2) + AMP + diphosphate + H(+). In terms of biological role, ligates lysine onto the cytidine present at position 34 of the AUA codon-specific tRNA(Ile) that contains the anticodon CAU, in an ATP-dependent manner. Cytidine is converted to lysidine, thus changing the amino acid specificity of the tRNA from methionine to isoleucine. This is tRNA(Ile)-lysidine synthase from Rickettsia typhi (strain ATCC VR-144 / Wilmington).